We begin with the raw amino-acid sequence, 383 residues long: Vesicle-associated membrane protein-associated protein scs2 (383 aa).

In terms of domain architecture, MSP spans 1–123 (MSVECSGELF…SIFDRKIRCV (123 aa)). Residues 1-362 (MSVECSGELF…TGASLTESPG (362 aa)) lie on the Cytoplasmic side of the membrane. Residues 127-146 (KQPPQSADKQVENTSTSNPP) are compositionally biased toward polar residues. Disordered stretches follow at residues 127-160 (KQPPQSADKQVENTSTSNPPVSVEGSENLASSVG) and 233-359 (ESAS…SLTE). Serine 236, serine 237, serine 259, serine 261, and serine 268 each carry phosphoserine. Positions 241 to 263 (DVARSKVQDIIDNEIPKPSESPR) are enriched in basic and acidic residues. Residues 289–300 (FDTKKNDFDSKL) show a composition bias toward basic and acidic residues. Residues 347–359 (ADPSSSTGASLTE) are compositionally biased toward polar residues. The chain crosses the membrane as a helical; Anchor for type IV membrane protein span at residues 363-383 (IPPNIVIILCLIFFLIGYLFF).

Belongs to the VAMP-associated protein (VAP) (TC 9.B.17) family. In terms of assembly, interacts (via MSP domain) with duc1 (via FFAT-motif); the interaction is direct and serves to restrict the localization of duc1 to areas of cell membrane-endoplasmic reticulum contact sites, and away from the cell division site. Interacts with epr1.

The protein localises to the endoplasmic reticulum membrane. Functionally, vesicle-associated membrane protein-associated protein (VAP) implicated in maintaining the cortical endoplasmic reticulum (ER)-plasma membrane (PM) attachment. ER-PM contacts function to modulate the distribution of contractile ring components to ensure robust ring assembly. ER-PM contacts function also in controlling exocytosis and maintenance of cell polarity regulating cell shape. VAPs play an important role in regulating eisosome assembly. VAPs also contribute to ER-phagy by tethering atg8 to the ER membrane, but also by maintaining the ER-plasma membrane contact. Restricts the localization of duc1 away from the site of cell division. The chain is Vesicle-associated membrane protein-associated protein scs2 (scs2) from Schizosaccharomyces pombe (strain 972 / ATCC 24843) (Fission yeast).